Reading from the N-terminus, the 436-residue chain is Ribulose bisphosphate carboxylase large chain (436 aa).

Substrate contacts are provided by asparagine 104 and threonine 154. Lysine 156 serves as the catalytic Proton acceptor. Residue lysine 158 coordinates substrate. Residues lysine 182, aspartate 184, and glutamate 185 each coordinate Mg(2+). Lysine 182 is modified (N6-carboxylysine). Histidine 275 serves as the catalytic Proton acceptor. 3 residues coordinate substrate: arginine 276, histidine 308, and serine 360.

It belongs to the RuBisCO large chain family. Type I subfamily. Heterohexadecamer of 8 large chains and 8 small chains. It depends on Mg(2+) as a cofactor.

It is found in the plastid. The protein localises to the chloroplast. The enzyme catalyses 2 (2R)-3-phosphoglycerate + 2 H(+) = D-ribulose 1,5-bisphosphate + CO2 + H2O. It carries out the reaction D-ribulose 1,5-bisphosphate + O2 = 2-phosphoglycolate + (2R)-3-phosphoglycerate + 2 H(+). RuBisCO catalyzes two reactions: the carboxylation of D-ribulose 1,5-bisphosphate, the primary event in carbon dioxide fixation, as well as the oxidative fragmentation of the pentose substrate in the photorespiration process. Both reactions occur simultaneously and in competition at the same active site. This chain is Ribulose bisphosphate carboxylase large chain, found in Euglena stellata.